We begin with the raw amino-acid sequence, 178 residues long: Peptide deformylase (178 aa).

Positions 96 and 138 each coordinate Fe cation. Residue Glu-139 is part of the active site. His-142 contacts Fe cation.

The protein belongs to the polypeptide deformylase family. Fe(2+) is required as a cofactor.

It carries out the reaction N-terminal N-formyl-L-methionyl-[peptide] + H2O = N-terminal L-methionyl-[peptide] + formate. In terms of biological role, removes the formyl group from the N-terminal Met of newly synthesized proteins. Requires at least a dipeptide for an efficient rate of reaction. N-terminal L-methionine is a prerequisite for activity but the enzyme has broad specificity at other positions. This Bartonella tribocorum (strain CIP 105476 / IBS 506) protein is Peptide deformylase.